Consider the following 371-residue polypeptide: 2-aminoethylphosphonate--pyruvate transaminase (371 aa).

Lysine 195 bears the N6-(pyridoxal phosphate)lysine mark.

It belongs to the class-V pyridoxal-phosphate-dependent aminotransferase family. PhnW subfamily. As to quaternary structure, homotetramer; however this is for an enzyme with a molecular weight of 16500, which is in disagreement with the weight of this protein. It depends on pyridoxal 5'-phosphate as a cofactor.

It catalyses the reaction (2-aminoethyl)phosphonate + pyruvate = phosphonoacetaldehyde + L-alanine. Inhibited by phosphonic acids and very slightly inhibited by aminophosphonic acids. Functionally, involved in phosphonate degradation. The chain is 2-aminoethylphosphonate--pyruvate transaminase (phnW) from Pseudomonas aeruginosa (strain ATCC 15692 / DSM 22644 / CIP 104116 / JCM 14847 / LMG 12228 / 1C / PRS 101 / PAO1).